Here is a 68-residue protein sequence, read N- to C-terminus: Large ribosomal subunit protein bL33c (68 aa).

It belongs to the bacterial ribosomal protein bL33 family.

The protein resides in the plastid. The protein localises to the chloroplast. The polypeptide is Large ribosomal subunit protein bL33c (Amborella trichopoda).